Consider the following 476-residue polypeptide: Homeobox even-skipped homolog protein 2 (476 aa).

2 disordered regions span residues 82 to 113 (TGSESTVSSEISSAAESRKKPGHYSEAAAEAD) and 142 to 185 (KGYA…GSGA). Low complexity-rich tracts occupy residues 84-96 (SESTVSSEISSAA) and 147-159 (SGSAAGTTTSASG). Residues 160 to 183 (SGLGSLHGGSGGSGGSAALGGSGS) are compositionally biased toward gly residues. A DNA-binding region (homeobox) is located at residues 188-247 (VRRYRTAFTREQIARLEKEFYRENYVSRPRRCELAAALNLPETTIKVWFQNRRMKDKRQR).

It belongs to the even-skipped homeobox family.

It is found in the nucleus. The chain is Homeobox even-skipped homolog protein 2 (EVX2) from Homo sapiens (Human).